Consider the following 910-residue polypeptide: Inactive disease susceptibility protein LOV1 (910 aa).

Residues 22-60 (ARLNGIGEQVDGLKRQLGRLQSLLKDADAKKHESERVRN) adopt a coiled-coil conformation. One can recognise an NB-ARC domain in the interval 169 to 461 (EQSVEALAGH…AAEGIITSSD (293 aa)). 3 LRR repeats span residues 584-609 (LPLL…IGDL), 610-632 (IHLR…LRNL), and 634-655 (LLLY…LKEM).

It belongs to the disease resistance NB-LRR family. RPP8/HRT subfamily.

This is Inactive disease susceptibility protein LOV1 (LOV1) from Arabidopsis thaliana (Mouse-ear cress).